The chain runs to 142 residues: Hemoglobin subunit zeta (142 aa).

Ser-2 bears the N-acetylserine mark. The region spanning 2-142 is the Globin domain; the sequence is SLTKTEGTII…VSSVLTEKYR (141 aa). Thr-29 carries the phosphothreonine modification. Ser-53 is modified (phosphoserine). His-59 is a heme b binding site. Phosphoserine is present on residues Ser-73 and Ser-82. Position 88 (His-88) interacts with heme b.

Belongs to the globin family. As to quaternary structure, heterotetramer of two zeta chains and beta-type chains.

Functionally, the zeta chain is an alpha-type chain of mammalian embryonic hemoglobin. The polypeptide is Hemoglobin subunit zeta (HBZ1) (Pan troglodytes (Chimpanzee)).